Reading from the N-terminus, the 956-residue chain is MADPAECSIKVMCRFRPLNEAEILRGDKFIPKFKGEETVVIGQGKPYVFDRVLPPNTTQEQVYNACAKQIVKDVLEGYNGTIFAYGQTSSGKTHTMEGKLHDPQLMGIIPRIAHDIFDHIYSMDENLEFHIKVSYFEIYLDKIRDLLDVSKTNLAVHEDKNRVPYVKGCTERFVSSPEEVMDVIDEGKANRHVAVTNMNEHSSRSHSIFLINIKQENVETEKKLSGKLYLVDLAGSEKVSKTGAEGAVLDEAKNINKSLSALGNVISALAEGTKTHVPYRDSKMTRILQDSLGGNCRTTIVICCSPSVFNEAETKSTLMFGQRAKTIKNTVSVNLELTAEEWKKKYEKEKEKNKALKSVLQHLEMELNRWRNGEAVPEDEQISAKDQKSLEPCDNTPIIDNITPVVDGISAEKEKYDEEITSLYRQLDDKDDEINQQSQLAEKLKQQMLDQDELLASTRRDYEKIQEELTRLQIENEAAKDEVKEVLQALEELAVNYDQKSQEVEDKTRANEQLTDELAQKTTTLTTTQRELSQLQELSNHQKKRATEILNLLLKDLGEIGGIIGTNDVKTLADVNGVIEEEFTMARLYISKMKSEVKSLVNRSKQLESAQMDSNRKMNASERELAACQLLISQHEAKIKSLTDYMQNMEQKRRQLEESQDSLSEELAKLRAQEKMHEVSFQDKEKEHLTRLQDAEEVKKALEQQMESHREAHQKQLSRLRDEIEEKQRIIDEIRDLNQKLQLEQERLSSDYNKLKIEDQEREVKLEKLLLLNDKREQAREDLKGLEETVSRELQTLHNLRKLFVQDLTTRVKKSVELDSDDGGGSAAQKQKISFLENNLEQLTKVHKQLVRDNADLRCELPKLEKRLRATAERVKALESALKEAKENAMRDRKRYQQEVDRIKEAVRAKNMARRAHSAQIAKPIRPGHYPASSPTAVHAVRGGGGGSSNSTHYQK.

Positions 8–327 (SIKVMCRFRP…LMFGQRAKTI (320 aa)) constitute a Kinesin motor domain. Residues glutamine 87, serine 89, serine 90, glycine 91, lysine 92, threonine 93, histidine 94, and lysine 99 each coordinate ATP. Residues 174 to 315 (VSSPEEVMDV…PSVFNEAETK (142 aa)) form a microtubule-binding region. A Phosphothreonine modification is found at threonine 403. Residues 406 to 923 (VDGISAEKEK…RRAHSAQIAK (518 aa)) adopt a coiled-coil conformation. Positions 859 to 956 (CELPKLEKRL…GSSNSTHYQK (98 aa)) are globular. Positions 910-956 (KNMARRAHSAQIAKPIRPGHYPASSPTAVHAVRGGGGGSSNSTHYQK) are disordered.

The protein belongs to the TRAFAC class myosin-kinesin ATPase superfamily. Kinesin family. Kinesin subfamily. In terms of assembly, oligomer composed of two heavy chains and two light chains. Interacts with GRIP1. Interacts with KLC3 and TRAK1. Interacts with ZFYVE27.

The protein localises to the cytoplasm. It is found in the cytoskeleton. The protein resides in the cell projection. Its subcellular location is the dendrite. The enzyme catalyses ATP + H2O = ADP + phosphate + H(+). Microtubule-associated force-producing protein that may play a role in organelle transport. Has ATPase activity. Involved in synaptic transmission. Mediates dendritic trafficking of mRNAs. Required for anterograde axonal transportation of MAPK8IP3/JIP3 which is essential for MAPK8IP3/JIP3 function in axon elongation. This chain is Kinesin heavy chain isoform 5C (Kif5c), found in Mus musculus (Mouse).